An 81-amino-acid chain; its full sequence is Cytotoxin 1b (81 aa).

The N-terminal stretch at 1 to 21 (MKTLLLTLVVVTIVCLDLGYT) is a signal peptide. 4 cysteine pairs are disulfide-bonded: Cys-24-Cys-42, Cys-35-Cys-59, Cys-63-Cys-74, and Cys-75-Cys-80.

It belongs to the three-finger toxin family. Short-chain subfamily. Type IA cytotoxin sub-subfamily. As to quaternary structure, monomer in solution; Homodimer and oligomer in the presence of negatively charged lipids forming a pore with a size ranging between 20 and 30 Angstroms. In terms of tissue distribution, expressed by the venom gland.

Its subcellular location is the secreted. It localises to the target cell membrane. In terms of biological role, shows cytolytic activity on many different cells by forming pore in lipid membranes. In vivo, increases heart rate or kills the animal by cardiac arrest. In addition, it binds to heparin with high affinity, interacts with Kv channel-interacting protein 1 (KCNIP1) in a calcium-independent manner, and binds to integrin alpha-V/beta-3 (ITGAV/ITGB3) with moderate affinity. The polypeptide is Cytotoxin 1b (Naja atra (Chinese cobra)).